Consider the following 124-residue polypeptide: Fluoride-specific ion channel FluC (124 aa).

4 helical membrane-spanning segments follow: residues 5–27 (LFVA…LMLQ), 42–62 (ILGS…EVSP), 63–83 (EIKA…STFS), and 95–115 (LVKA…VVYL). 2 residues coordinate Na(+): Gly-74 and Thr-77.

Belongs to the fluoride channel Fluc/FEX (TC 1.A.43) family.

It is found in the cell inner membrane. It catalyses the reaction fluoride(in) = fluoride(out). With respect to regulation, na(+) is not transported, but it plays an essential structural role and its presence is essential for fluoride channel function. Fluoride-specific ion channel. Important for reducing fluoride concentration in the cell, thus reducing its toxicity. The polypeptide is Fluoride-specific ion channel FluC (Shewanella piezotolerans (strain WP3 / JCM 13877)).